The chain runs to 81 residues: 8.6 kDa transglutaminase substrate (81 aa).

In terms of assembly, multimeric. In terms of tissue distribution, hemolymph; Hemocyte.

This Tachypleus tridentatus (Japanese horseshoe crab) protein is 8.6 kDa transglutaminase substrate.